We begin with the raw amino-acid sequence, 274 residues long: Undecaprenyl-diphosphatase (274 aa).

Transmembrane regions (helical) follow at residues A44–W64, L85–I105, L109–A129, A185–L205, V214–C234, and F247–T267.

Belongs to the UppP family.

It is found in the cell inner membrane. The enzyme catalyses di-trans,octa-cis-undecaprenyl diphosphate + H2O = di-trans,octa-cis-undecaprenyl phosphate + phosphate + H(+). In terms of biological role, catalyzes the dephosphorylation of undecaprenyl diphosphate (UPP). Confers resistance to bacitracin. The sequence is that of Undecaprenyl-diphosphatase from Variovorax paradoxus (strain S110).